A 150-amino-acid polypeptide reads, in one-letter code: uncharacterized protein (150 aa).

This is an uncharacterized protein from Azospirillum brasilense.